The sequence spans 588 residues: Sulfite reductase [NADPH] hemoprotein beta-component (588 aa).

The [4Fe-4S] cluster site is built by C442, C448, C487, and C491. Siroheme is bound at residue C491.

The protein belongs to the nitrite and sulfite reductase 4Fe-4S domain family. As to quaternary structure, alpha(8)-beta(8). The alpha component is a flavoprotein, the beta component is a hemoprotein. It depends on siroheme as a cofactor. [4Fe-4S] cluster is required as a cofactor.

The catalysed reaction is hydrogen sulfide + 3 NADP(+) + 3 H2O = sulfite + 3 NADPH + 4 H(+). The protein operates within sulfur metabolism; hydrogen sulfide biosynthesis; hydrogen sulfide from sulfite (NADPH route): step 1/1. Its function is as follows. Component of the sulfite reductase complex that catalyzes the 6-electron reduction of sulfite to sulfide. This is one of several activities required for the biosynthesis of L-cysteine from sulfate. This Actinobacillus pleuropneumoniae serotype 7 (strain AP76) protein is Sulfite reductase [NADPH] hemoprotein beta-component.